The chain runs to 358 residues: NADH-quinone oxidoreductase subunit H (358 aa).

Transmembrane regions (helical) follow at residues 20–40 (ITVG…IPLI), 95–115 (ALFY…WAVI), 128–148 (IGLL…IIAG), 168–188 (ISYE…SGSM), 206–226 (VFSW…ISAV), 253–273 (GFAF…ISAL), 290–310 (WGFI…AVLY), and 334–354 (VLIP…ISPL).

Belongs to the complex I subunit 1 family. NDH-1 is composed of 14 different subunits. Subunits NuoA, H, J, K, L, M, N constitute the membrane sector of the complex.

The protein resides in the cell inner membrane. It carries out the reaction a quinone + NADH + 5 H(+)(in) = a quinol + NAD(+) + 4 H(+)(out). In terms of biological role, NDH-1 shuttles electrons from NADH, via FMN and iron-sulfur (Fe-S) centers, to quinones in the respiratory chain. The immediate electron acceptor for the enzyme in this species is believed to be ubiquinone. Couples the redox reaction to proton translocation (for every two electrons transferred, four hydrogen ions are translocated across the cytoplasmic membrane), and thus conserves the redox energy in a proton gradient. This subunit may bind ubiquinone. This Neisseria meningitidis serogroup C (strain 053442) protein is NADH-quinone oxidoreductase subunit H.